Consider the following 198-residue polypeptide: Recombination protein RecR (198 aa).

The segment at 57–72 (CSVCGHITENDPCYIC) adopts a C4-type zinc-finger fold. The region spanning 80-175 (SVICVVEDDK…KVTRLAQGLS (96 aa)) is the Toprim domain.

It belongs to the RecR family.

Its function is as follows. May play a role in DNA repair. It seems to be involved in an RecBC-independent recombinational process of DNA repair. It may act with RecF and RecO. This chain is Recombination protein RecR, found in Staphylococcus aureus (strain MRSA252).